A 792-amino-acid chain; its full sequence is DEAD-box ATP-dependent RNA helicase 40 (792 aa).

The segment covering 1-16 (MSAGTAPAAPRYAPDD) has biased composition (low complexity). 2 disordered regions span residues 1 to 25 (MSAGTAPAAPRYAPDDPSLPKPWRG) and 44 to 118 (TQYE…PLPA). The 35-residue stretch at 17-51 (PSLPKPWRGLVDGTTGYLYYWNPETNITQYEKPLP) folds into the WW domain. Residues 52–68 (PEDQLPPPPPLPPPPPR) show a composition bias toward pro residues. Composition is skewed to basic and acidic residues over residues 70–80 (GRGDRDRDRRD) and 88–108 (PRRDHRDRDRDRDRRHDDHRS). The Q motif signature appears at 150–178 (TSFETGGFPPEILKEIQRAGFSSPTPIQA). Residues 181-355 (WPIALQCQDV…EDLLVHPVQV (175 aa)) form the Helicase ATP-binding domain. Residue 194–201 (AKTGSGKT) coordinates ATP. Positions 303–306 (DEAD) match the DEAD box motif. A Helicase C-terminal domain is found at 384-528 (RLEQILRSQD…RVPRDLADMA (145 aa)). Residues 523–792 (DLADMASRGG…NATVQNGGDN (270 aa)) are disordered. Basic and acidic residues-rich tracts occupy residues 543 to 560 (TRSDRGGSHSELDSRYGG) and 572 to 588 (DSSRSSRRHDYGDDGRS). 2 stretches are compositionally biased toward basic residues: residues 589–599 (RRSGRGRSRSR) and 609–654 (RSPK…RRHE). Positions 668–708 (GHGERKRTPEADPSRNHTNHSDPKDDRHPEDGKVGKVDLDR) are enriched in basic and acidic residues. Residues 725–739 (GKTSRSVSPGNQVEG) show a composition bias toward polar residues. The span at 764–777 (DEEEGMIDEDGEIA) shows a compositional bias: acidic residues.

The protein belongs to the DEAD box helicase family. DDX5/DBP2 subfamily.

It localises to the nucleus. It catalyses the reaction ATP + H2O = ADP + phosphate + H(+). Functionally, ATP-dependent RNA helicase involved nonsense-mediated mRNA decay and ribosome biogenesis through rRNA processing. This Oryza sativa subsp. japonica (Rice) protein is DEAD-box ATP-dependent RNA helicase 40.